The chain runs to 340 residues: 4-hydroxythreonine-4-phosphate dehydrogenase (340 aa).

T135 is a substrate binding site. 3 residues coordinate a divalent metal cation: H170, H215, and H276. Substrate is bound by residues K284, N293, and R302.

It belongs to the PdxA family. As to quaternary structure, homodimer. Requires a divalent metal cation as cofactor.

It is found in the cytoplasm. It catalyses the reaction 4-(phosphooxy)-L-threonine + NAD(+) = 3-amino-2-oxopropyl phosphate + CO2 + NADH. The protein operates within cofactor biosynthesis; pyridoxine 5'-phosphate biosynthesis; pyridoxine 5'-phosphate from D-erythrose 4-phosphate: step 4/5. In terms of biological role, catalyzes the NAD(P)-dependent oxidation of 4-(phosphooxy)-L-threonine (HTP) into 2-amino-3-oxo-4-(phosphooxy)butyric acid which spontaneously decarboxylates to form 3-amino-2-oxopropyl phosphate (AHAP). The protein is 4-hydroxythreonine-4-phosphate dehydrogenase of Synechococcus sp. (strain JA-2-3B'a(2-13)) (Cyanobacteria bacterium Yellowstone B-Prime).